The sequence spans 99 residues: MTLTKAEMSEYLFDKLGLSKRDAKELVELFFEEIRRALENGEQVKLSGFGNFDLRDKNQRPGRNPKTGEDIPITARRVVTFRPGQKLKSRVENASPKDE.

A disordered region spans residues 49–72 (FGNFDLRDKNQRPGRNPKTGEDIP).

It belongs to the bacterial histone-like protein family. Heterodimer of an alpha and a beta chain.

In terms of biological role, this protein is one of the two subunits of integration host factor, a specific DNA-binding protein that functions in genetic recombination as well as in transcriptional and translational control. This Escherichia coli O9:H4 (strain HS) protein is Integration host factor subunit alpha.